The sequence spans 151 residues: UPF0208 membrane protein YfbV (151 aa).

2 helical membrane passes run 46–65 (YAIRFMPPVAVFTLCWQIAL) and 69–91 (LGPAVATALFALSLPMQGLWWLG).

It belongs to the UPF0208 family.

The protein resides in the cell inner membrane. This is UPF0208 membrane protein YfbV from Salmonella choleraesuis (strain SC-B67).